A 139-amino-acid polypeptide reads, in one-letter code: Transcription antitermination protein NusB (139 aa).

It belongs to the NusB family.

Its function is as follows. Involved in transcription antitermination. Required for transcription of ribosomal RNA (rRNA) genes. Binds specifically to the boxA antiterminator sequence of the ribosomal RNA (rrn) operons. The chain is Transcription antitermination protein NusB from Edwardsiella ictaluri (strain 93-146).